The sequence spans 41 residues: Large ribosomal subunit protein bL36 (41 aa).

The protein belongs to the bacterial ribosomal protein bL36 family.

The polypeptide is Large ribosomal subunit protein bL36 (Xanthobacter autotrophicus (strain ATCC BAA-1158 / Py2)).